The following is a 754-amino-acid chain: 5-methyltetrahydropteroyltriglutamate--homocysteine methyltransferase (754 aa).

Residues Arg-16–Lys-19 and Lys-114 each bind 5-methyltetrahydropteroyltri-L-glutamate. L-homocysteine is bound by residues Ile-430–Ser-432 and Glu-483. L-methionine contacts are provided by residues Ile-430 to Ser-432 and Glu-483. 5-methyltetrahydropteroyltri-L-glutamate contacts are provided by residues Arg-514 to Cys-515 and Trp-560. Asp-598 serves as a coordination point for L-homocysteine. Asp-598 lines the L-methionine pocket. Glu-604 contacts 5-methyltetrahydropteroyltri-L-glutamate. The Zn(2+) site is built by His-640, Cys-642, and Glu-664. The Proton donor role is filled by His-693. Zn(2+) is bound at residue Cys-725.

It belongs to the vitamin-B12 independent methionine synthase family. Requires Zn(2+) as cofactor.

The catalysed reaction is 5-methyltetrahydropteroyltri-L-glutamate + L-homocysteine = tetrahydropteroyltri-L-glutamate + L-methionine. It participates in amino-acid biosynthesis; L-methionine biosynthesis via de novo pathway; L-methionine from L-homocysteine (MetE route): step 1/1. In terms of biological role, catalyzes the transfer of a methyl group from 5-methyltetrahydrofolate to homocysteine resulting in methionine formation. The polypeptide is 5-methyltetrahydropteroyltriglutamate--homocysteine methyltransferase (Aeromonas salmonicida (strain A449)).